We begin with the raw amino-acid sequence, 870 residues long: MSRSVISLERSTEAKKAAACPLEVIVSEAAKVIAPLWPISAFIARHPWMGMEDKSFVDAADRLQEAYGIDLYPPMAVFHAALSKGEIDVSFIERRLQRWLDDEPLPAPRHEAERLCRALLWNDAVPEEALQMPKLIELAAAMPLRSVSIRTRSVRLGLEKRLDQQMIKWCKLFYDRGEAVWALPHREHGFYGSWRRLAPLDPSLSKEERKRLFDWPHHPEEALQRALEQLGVQDEEAVAYLEAHLLALPGWAGMMVWQSRRAGDEIGGLINYLAVRLSLEWVFTAPHLPLKEEENEDDRAVGPLLAAWIHWGGMTLDDWRRLPLEDRQARLVFADRFWRIGRRHLWLEAWEDTYEAKLKEAVLTRQPEEPKEQAAAQLLFCIDVRSEPFRRHVEAVGPFETYGCAGFFGLPIQTRVLDSDDAHPSCPAIVAPRHEINETASPETAAPYRRRRDLFRFVGRTFKKIKRHLLAGLLLPEMSGPWLGLHTIARSAAPAWAGQAIHQAEMSAQQKPKTTLSLDCQGHDETTGLPIGLTKEEQVQYVKQLLVNIGLTSSFAPLVVVCGHESETTNNPYASALDCGACGGAAGAFNARVFAALANLPHVRDGLAKEGIVIPDETVFVAAEHITTVDELRWVEVPPLSEAAEAAFRQLKQALAGVSRQANAERMAKLPHVGAMPRDPVAEARRRAVDWSEIRPEWGLAGNAAFLIGRRALTKGVHLDGRVFLHSYDWREDPTGEALAGIIAGPATVGQWINLQYYASTVAPNYYGSGDKTTQTVTGGIGVMQGNGSDLLAGLPWQSVAASDREWFHSPLRLLVIIEAPFSYIERLLDENSEFRRKVQNGWLRLASIDPDSGAWVNWEAGRLASVQQR.

Zn(2+) contacts are provided by cysteine 381, aspartate 383, histidine 564, and cysteine 579.

It belongs to the inorganic carbon transporter (TC 9.A.2) DabA family. In terms of assembly, forms a complex with DabB. Zn(2+) is required as a cofactor.

It is found in the cell membrane. Its function is as follows. Part of an energy-coupled inorganic carbon pump. This is Probable inorganic carbon transporter subunit DabA from Geobacillus kaustophilus (strain HTA426).